The chain runs to 136 residues: uncharacterized protein (136 aa).

A helical transmembrane segment spans residues 14–34 (ASVFAFFVLFLFCLKIILVLF).

The protein resides in the membrane. This is an uncharacterized protein from Mycoplasma genitalium (strain ATCC 33530 / DSM 19775 / NCTC 10195 / G37) (Mycoplasmoides genitalium).